We begin with the raw amino-acid sequence, 642 residues long: Threonine--tRNA ligase (642 aa).

The 61-residue stretch at 1-61 (MPVITLPDGS…ENDAQLAIIT (61 aa)) folds into the TGS domain. Residues 243 to 534 (DHRKIGKQLD…LTEEFAGFFP (292 aa)) form a catalytic region. Position 286 is an N6-acetyllysine (Lys-286). 3 residues coordinate Zn(2+): Cys-334, His-385, and His-511.

Belongs to the class-II aminoacyl-tRNA synthetase family. As to quaternary structure, homodimer. It depends on Zn(2+) as a cofactor.

The protein resides in the cytoplasm. The enzyme catalyses tRNA(Thr) + L-threonine + ATP = L-threonyl-tRNA(Thr) + AMP + diphosphate + H(+). Catalyzes the attachment of threonine to tRNA(Thr) in a two-step reaction: L-threonine is first activated by ATP to form Thr-AMP and then transferred to the acceptor end of tRNA(Thr). Also edits incorrectly charged L-seryl-tRNA(Thr). The polypeptide is Threonine--tRNA ligase (Escherichia fergusonii (strain ATCC 35469 / DSM 13698 / CCUG 18766 / IAM 14443 / JCM 21226 / LMG 7866 / NBRC 102419 / NCTC 12128 / CDC 0568-73)).